We begin with the raw amino-acid sequence, 299 residues long: Recombination-associated protein RdgC (299 aa).

The protein belongs to the RdgC family.

It localises to the cytoplasm. The protein resides in the nucleoid. Its function is as follows. May be involved in recombination. This is Recombination-associated protein RdgC from Laribacter hongkongensis (strain HLHK9).